The following is a 559-amino-acid chain: Phenylalanine--tRNA ligase beta subunit (559 aa).

Positions 274–350 constitute a B5 domain; sequence FEPKIIDVHT…LGYGFNELPA (77 aa). Mg(2+) contacts are provided by aspartate 328, aspartate 334, glutamate 337, and asparagine 338.

The protein belongs to the phenylalanyl-tRNA synthetase beta subunit family. Type 2 subfamily. As to quaternary structure, tetramer of two alpha and two beta subunits. Mg(2+) is required as a cofactor.

The protein localises to the cytoplasm. It catalyses the reaction tRNA(Phe) + L-phenylalanine + ATP = L-phenylalanyl-tRNA(Phe) + AMP + diphosphate + H(+). This Methanosphaera stadtmanae (strain ATCC 43021 / DSM 3091 / JCM 11832 / MCB-3) protein is Phenylalanine--tRNA ligase beta subunit.